Reading from the N-terminus, the 202-residue chain is Na(+)-translocating NADH-quinone reductase subunit E (202 aa).

Transmembrane regions (helical) follow at residues Ser-11 to Val-31, Ile-35 to Ala-55, Phe-81 to Val-101, Gly-114 to Ile-134, Val-144 to Val-164, and Leu-180 to Ile-200.

It belongs to the NqrDE/RnfAE family. As to quaternary structure, composed of six subunits; NqrA, NqrB, NqrC, NqrD, NqrE and NqrF.

It is found in the cell inner membrane. The enzyme catalyses a ubiquinone + n Na(+)(in) + NADH + H(+) = a ubiquinol + n Na(+)(out) + NAD(+). Functionally, NQR complex catalyzes the reduction of ubiquinone-1 to ubiquinol by two successive reactions, coupled with the transport of Na(+) ions from the cytoplasm to the periplasm. NqrA to NqrE are probably involved in the second step, the conversion of ubisemiquinone to ubiquinol. The chain is Na(+)-translocating NADH-quinone reductase subunit E from Methylococcus capsulatus (strain ATCC 33009 / NCIMB 11132 / Bath).